The sequence spans 362 residues: Class I histocompatibility antigen, Gogo-B*0101 alpha chain (362 aa).

A signal peptide spans 1 to 24; it reads MRVTAPRTLLLLLSAALALTETWA. The interval 25-114 is alpha-1; that stretch reads GSHSMRYFDT…ALRYYNQSEA (90 aa). Residues 25–308 are Extracellular-facing; that stretch reads GSHSMRYFDT…EPSSQSTIPI (284 aa). A glycan (N-linked (GlcNAc...) asparagine) is linked at asparagine 110. Residues 115–206 form an alpha-2 region; the sequence is GSHTIQRMFG…ENGRETLQRA (92 aa). 2 disulfides stabilise this stretch: cysteine 125–cysteine 188 and cysteine 227–cysteine 283. Positions 207 to 298 are alpha-3; it reads DTPKTHVTHH…GLPKPLTLRW (92 aa). The Ig-like C1-type domain maps to 209-295; that stretch reads PKTHVTHHPI…QHEGLPKPLT (87 aa). The connecting peptide stretch occupies residues 299-308; sequence EPSSQSTIPI. Residues 309–332 traverse the membrane as a helical segment; sequence VGIVAGLAVLAVVVIGAVVTAVIC. Topologically, residues 333–362 are cytoplasmic; the sequence is RRKSSGGKGGSYSQAASSDSAQGSDVSLTA. A disordered region spans residues 335–362; it reads KSSGGKGGSYSQAASSDSAQGSDVSLTA. Low complexity predominate over residues 343–362; the sequence is SYSQAASSDSAQGSDVSLTA. Residues serine 356 and serine 359 each carry the phosphoserine modification.

The protein belongs to the MHC class I family. As to quaternary structure, heterodimer of an alpha chain and a beta chain (beta-2-microglobulin).

It localises to the membrane. Involved in the presentation of foreign antigens to the immune system. The sequence is that of Class I histocompatibility antigen, Gogo-B*0101 alpha chain from Gorilla gorilla gorilla (Western lowland gorilla).